A 66-amino-acid polypeptide reads, in one-letter code: Cold shock protein 1 (66 aa).

The CSD domain maps to 4–63 (GTVKWFNADKGYGFITGEDGNDVFVHFSAIQTDGFKTLEEGQKVTFDEESSDRGPQAANV). The interval 47 to 66 (VTFDEESSDRGPQAANVVPQ) is disordered.

It is found in the cytoplasm. The sequence is that of Cold shock protein 1 (csp) from Lactiplantibacillus plantarum (strain ATCC BAA-793 / NCIMB 8826 / WCFS1) (Lactobacillus plantarum).